The chain runs to 142 residues: Large ribosomal subunit protein uL11 (142 aa).

It belongs to the universal ribosomal protein uL11 family. In terms of assembly, part of the ribosomal stalk of the 50S ribosomal subunit. Interacts with L10 and the large rRNA to form the base of the stalk. L10 forms an elongated spine to which L12 dimers bind in a sequential fashion forming a multimeric L10(L12)X complex. In terms of processing, one or more lysine residues are methylated.

Functionally, forms part of the ribosomal stalk which helps the ribosome interact with GTP-bound translation factors. This Vibrio vulnificus (strain YJ016) protein is Large ribosomal subunit protein uL11.